The sequence spans 313 residues: Short-chain dehydrogenase/reductase family 9C member 7 (313 aa).

29-53 (FITGCDSGFGNLLARQLVDRGMRVL) serves as a coordination point for NADP(+). Serine 160 lines the substrate pocket. The active-site Proton acceptor is tyrosine 172. Serine 185 carries the post-translational modification Phosphoserine.

The protein belongs to the short-chain dehydrogenases/reductases (SDR) family.

The protein localises to the cytoplasm. The catalysed reaction is a N-[omega-(9R,10R)-epoxy-(13R)-hydroxy-(11E)-octadecenoyloxy]acyl-beta-D-glucosyl-(1&lt;-&gt;1)-sphing-4E-enine + NAD(+) = a N-[omega-(9R,10R)-epoxy-13-oxo-(11E)-octadecenoyloxy]acyl-beta-D-glucosyl-(1&lt;-&gt;1)-sphing-4E-enine + NADH + H(+). It catalyses the reaction a N-[omega-(9R,10R)-epoxy-(13R)-hydroxy-(11E)-octadecenoyloxy]-acylsphing-4E-enine + NAD(+) = a N-[omega-(9R,10R)-epoxy-13-oxo-(11E)-octadecenoyloxy]-acylsphing-4E-enine + NADH + H(+). Functionally, plays a crucial role in the formation of the epidermal permeability barrier. Catalyzes the NAD+-dependent dehydrogenation of the linoleate 9,10-trans-epoxy-11E-13-alcohol esterified in omega-O-acylceramides (such as in N-[omega-(9R,10R)-epoxy-(13R)-hydroxy-(11E)-octadecenoyloxy]-acylsphing-4E-enine) to the corresponding 13-ketone, the reactive moiety required for binding of epidermal ceramides to proteins. Displays weak conversion of all-trans-retinal to all-trans-retinol in the presence of NADH. Has apparently no steroid dehydrogenase activity. The chain is Short-chain dehydrogenase/reductase family 9C member 7 (SDR9C7) from Bos taurus (Bovine).